A 27-amino-acid chain; its full sequence is Delta-actitoxin-Avd2a (27 aa).

Cystine bridges form between cysteine 3/cysteine 17, cysteine 4/cysteine 11, and cysteine 6/cysteine 22.

The protein belongs to the sea anemone short toxin (type III) family.

It is found in the secreted. The protein localises to the nematocyst. Functionally, specific arthropod (crab and insect) toxin that inhibits inactivation of voltage-gated sodium channels. It competes well with the site-3 toxin LqhalphaIT (from the scorpion L.quinquestriatus (AC P17728)) on binding to cockroach neuronal membranes (Ki=21.4 nM), and inhibits the inactivation of D.melanogaster channel (DmNav1), but not that of mammalian Navs expressed in Xenopus oocytes. Its activity is synergically enhanced by ligands of receptor site-4 (Bj-xtrIT (AC P56637)). Its ability to inhibit the channel mutant DmNav1[D1701R] only decreases 5-fold, whereas the inhibition activity is completely lost by LqhalphaIT and Av2 when tested on DmNav1[D1701R]. The chain is Delta-actitoxin-Avd2a from Anemonia sulcata (Mediterranean snakelocks sea anemone).